The chain runs to 346 residues: 26S proteasome non-ATPase regulatory subunit 4 (346 aa).

In terms of domain architecture, VWFA spans 5 to 190 (STMICVDNSE…LTDALLQSSV (186 aa)). UIM domains lie at 216–235 (ENDPDLALALRVSMEEERAR) and 273–292 (TEEQQLEWALRLSMQENAPA). The disordered stretch occupies residues 290–346 (APAEQPQVQHEQMDVDGAPAVGGDNLDDLMNNPELLQQIVDDLPAANAEKDDDKEKK). Positions 337–346 (AEKDDDKEKK) are enriched in basic and acidic residues.

This sequence belongs to the proteasome subunit S5A family. The 26S proteasome is composed of a core protease, known as the 20S proteasome, capped at one or both ends by the 19S regulatory complex (RC). The RC is composed of at least 18 different subunits in two subcomplexes, the base and the lid, which form the portions proximal and distal to the 20S proteolytic core, respectively. As to expression, broadly expressed with high expression in the pharynx, intestine, hypodermis and spermatheca and weak expression in the excretory cell, body wall muscle, vulva and somatic gonad.

The protein resides in the cytoplasm. It is found in the nucleus. Binds and presumably selects ubiquitin-conjugates for destruction. Required for protein degradation and ubiquitin-proteasome system (UBS) function and regulates proteasomal subunit expression. Involvement in UBS might be cell type specific. Regulator of the autophagy-lysosome pathway that may confer resistance to autophagy by regulating the expression of autophagy-related proteins such as lgg-1, and by regulating lysosome formation, possibly by modulating elt-2 activity. Required for fertility, sperm production, and sex determination through regulation of tra-2 protein. Plays a role in the elimination of paternal mitochondria in fertilized eggs. The protein is 26S proteasome non-ATPase regulatory subunit 4 of Caenorhabditis elegans.